Reading from the N-terminus, the 258-residue chain is Imidazole glycerol phosphate synthase subunit HisF (258 aa).

Active-site residues include aspartate 11 and aspartate 130.

The protein belongs to the HisA/HisF family. Heterodimer of HisH and HisF.

Its subcellular location is the cytoplasm. The catalysed reaction is 5-[(5-phospho-1-deoxy-D-ribulos-1-ylimino)methylamino]-1-(5-phospho-beta-D-ribosyl)imidazole-4-carboxamide + L-glutamine = D-erythro-1-(imidazol-4-yl)glycerol 3-phosphate + 5-amino-1-(5-phospho-beta-D-ribosyl)imidazole-4-carboxamide + L-glutamate + H(+). It participates in amino-acid biosynthesis; L-histidine biosynthesis; L-histidine from 5-phospho-alpha-D-ribose 1-diphosphate: step 5/9. IGPS catalyzes the conversion of PRFAR and glutamine to IGP, AICAR and glutamate. The HisF subunit catalyzes the cyclization activity that produces IGP and AICAR from PRFAR using the ammonia provided by the HisH subunit. The polypeptide is Imidazole glycerol phosphate synthase subunit HisF (Salmonella agona (strain SL483)).